A 181-amino-acid chain; its full sequence is Biofilm-surface layer protein A (181 aa).

Residues 1-28 (MKRKLLSSLAISALSLGLLVSAPTASFA) form the signal peptide.

Belongs to the BslA/BslB family. In terms of assembly, forms polymers.

Its subcellular location is the secreted. The protein localises to the cell wall. Involved in biofilm formation. Self-polymerizes and forms a layer on the surface of biofilms that confers hydrophobicity to the biofilm. The layer is stable and capable of resistance to high mechanical force compression. Required for complex colony architecture. May function synergistically with exopolysaccharides and TasA amyloid fibers to facilitate the assembly of the biofilm matrix. The protein is Biofilm-surface layer protein A of Bacillus subtilis (strain 168).